The sequence spans 676 residues: MSGPLASGTCSDPEEVSDLKSPLSSRFREPLTHARFQELFGGAEPEPELPAEPCLPCLCRLRRRRASACSGPGAWRVLLARLPPLRWLPQYRWRAWLLGDAVAGVTVGVVHVPQGMAFALLTSVPPVFGLYTSFFPVLIYSLLGTGRHLSTGTFAVLSLMTGSVVERVVPEPLAGNLSGIEREQLEARRVGAAAAVAFGSGALMLGMFVLQLGVLSTFLSEPVIKALTSGAALHVLVSQLPSLLGLSLPRQIGCFSLFKTLAAVLSALSQSSPAEVTISALSLVLLVPVKELNVRFRDRLLTPIPGEVVMVLLATVLCFTSSLDTRYNVQVVGPLPGGFPQPLLPTLDELPRILADSLPISLVTFAVSTSLASIYADKYSYTIEPNQELLAHGVSNLISSLFSCFPNSATLATTSLLVDAGGNTQLAGLFSCAVVLAALLWLRPFFYYLPKAVLACINISSMRQMFFQMQELPQLWHISHVDFAVWIVTWVAVVTLNVDLGLAVGVVVSMMTVVCRTQRVQCLELGLAEGTELYRPIRESRKLLQVPGLCILSYPAPLYFATRGQFHRILEWHLGLGERIKPGAEPVRVAILDFSGITFVDAAGAREVVQLTRRCQDDGIYLLLAQCNALVLETLTRARLLDSVSPEQLFVSVQDAAAHALERLKPTGPKICTVWV.

Residues 1–24 form a disordered region; it reads MSGPLASGTCSDPEEVSDLKSPLS. Helical transmembrane passes span 101-121, 124-144, 149-165, 190-210, 226-246, 267-287, 300-320, 353-373, 398-418, 426-446, and 487-507; these read AVAG…FALL, VPPV…SLLG, LSTG…GSVV, VGAA…MFVL, ALTS…LLGL, ALSQ…VLLV, LLTP…LCFT, ILAD…SLAS, ISSL…SLLV, LAGL…RPFF, and IVTW…VGVV. The 122-residue stretch at 539–660 folds into the STAS domain; the sequence is ESRKLLQVPG…VSVQDAAAHA (122 aa).

The protein belongs to the SLC26A/SulP transporter (TC 2.A.53) family.

The protein resides in the membrane. In terms of biological role, chloride/bicarbonate exchanger. In Mus musculus (Mouse), this protein is Solute carrier family 26 member 10 (Slc26a10).